Here is a 318-residue protein sequence, read N- to C-terminus: Putative enoyl-CoA hydratase EchA13 (318 aa).

Residues Leu90–Arg110 are disordered.

This sequence belongs to the enoyl-CoA hydratase/isomerase family.

The polypeptide is Putative enoyl-CoA hydratase EchA13 (echA13) (Mycobacterium tuberculosis (strain ATCC 25618 / H37Rv)).